Reading from the N-terminus, the 198-residue chain is Putative manganese efflux pump MntP (198 aa).

Helical transmembrane passes span 3-23 (SIEL…VAIC), 37-57 (VLTG…GYLL), 65-85 (ITSI…INMI), 105-127 (SLTV…FAFL), 131-153 (IIPA…VKIG), and 171-191 (ILIG…SFVF).

The protein belongs to the MntP (TC 9.B.29) family.

The protein resides in the cell membrane. In terms of biological role, probably functions as a manganese efflux pump. This chain is Putative manganese efflux pump MntP, found in Acetivibrio thermocellus (strain ATCC 27405 / DSM 1237 / JCM 9322 / NBRC 103400 / NCIMB 10682 / NRRL B-4536 / VPI 7372) (Clostridium thermocellum).